Consider the following 278-residue polypeptide: Large ribosomal subunit protein uL2 (278 aa).

Composition is skewed to basic residues over residues 210–219 (RKRWLGKRPQ) and 252–263 (KKSRGIKTRNSK). The interval 210 to 278 (RKRWLGKRPQ…LIIRHRKGNK (69 aa)) is disordered.

This sequence belongs to the universal ribosomal protein uL2 family. As to quaternary structure, part of the 50S ribosomal subunit. Forms a bridge to the 30S subunit in the 70S ribosome.

Functionally, one of the primary rRNA binding proteins. Required for association of the 30S and 50S subunits to form the 70S ribosome, for tRNA binding and peptide bond formation. It has been suggested to have peptidyltransferase activity; this is somewhat controversial. Makes several contacts with the 16S rRNA in the 70S ribosome. This is Large ribosomal subunit protein uL2 from Lactobacillus gasseri (strain ATCC 33323 / DSM 20243 / BCRC 14619 / CIP 102991 / JCM 1131 / KCTC 3163 / NCIMB 11718 / NCTC 13722 / AM63).